A 138-amino-acid polypeptide reads, in one-letter code: Putative pre-16S rRNA nuclease (138 aa).

The protein belongs to the YqgF nuclease family.

The protein localises to the cytoplasm. Functionally, could be a nuclease involved in processing of the 5'-end of pre-16S rRNA. This Clostridium beijerinckii (strain ATCC 51743 / NCIMB 8052) (Clostridium acetobutylicum) protein is Putative pre-16S rRNA nuclease.